We begin with the raw amino-acid sequence, 155 residues long: Ribosomal RNA large subunit methyltransferase H (155 aa).

S-adenosyl-L-methionine contacts are provided by residues leucine 72, glycine 103, and 122 to 127 (LSPLTL).

Belongs to the RNA methyltransferase RlmH family. In terms of assembly, homodimer.

The protein localises to the cytoplasm. It carries out the reaction pseudouridine(1915) in 23S rRNA + S-adenosyl-L-methionine = N(3)-methylpseudouridine(1915) in 23S rRNA + S-adenosyl-L-homocysteine + H(+). Its function is as follows. Specifically methylates the pseudouridine at position 1915 (m3Psi1915) in 23S rRNA. The sequence is that of Ribosomal RNA large subunit methyltransferase H from Actinobacillus pleuropneumoniae serotype 3 (strain JL03).